The primary structure comprises 430 residues: FAD-dependent monooxygenase asL4 (430 aa).

FAD contacts are provided by residues 11-14, 33-34, Arg-108, and Tyr-278; these read GGIA and ER.

This sequence belongs to the aromatic-ring hydroxylase family. The cofactor is FAD.

It functions in the pathway secondary metabolite biosynthesis; terpenoid biosynthesis. In terms of biological role, flavin-dependent monooxygenase; part of the gene cluster that mediates the biosynthesis of xenovulene A, an unusual meroterpenoid that has potent inhibitory effects on the human gamma-aminobutyrate A (GABAA) benzodiazepine receptor. The first step of xenovulene A biosynthesis is the biosynthesis of 3-methylorcinaldehyde performed by the non-reducing polyketide synthase aspks1. The salicylate hydroxylase asL1 then catalyzes the oxidative dearomatization of 3-methylorcinaldehyde to yield a dearomatized hydroxycyclohexadione. The 2-oxoglutarate-dependent dioxygenase asL3 further catalyzes the oxidative ring expansion to provide the first tropolone metabolite. The cytochrome P450 monooxygenase asR2 allows the synthesis of tropolone hemiacetal. In parallel, a previously unrecognised class of terpene cyclase, asR6, produces alpha-humulene from farnesylpyrophosphate (FPP). The putative Diels-Alderase asR5 probably catalyzes the formation of the tropolone-humulene skeleton by linking humulene and the polyketide moiety. Oxidative-ring contractions catalyzed by asL4 and asL6 then processively remove carbon atoms from the polyketide to yield xenovulene A. This is FAD-dependent monooxygenase asL4 from Sarocladium schorii (Acremonium strictum (strain IMI 501407)).